Reading from the N-terminus, the 397-residue chain is Ribosomal RNA large subunit methyltransferase I (397 aa).

Residues 2 to 81 enclose the PUA domain; that stretch reads SAQVILQPSR…ESIDNGFFLR (80 aa).

Belongs to the methyltransferase superfamily. RlmI family.

It is found in the cytoplasm. It catalyses the reaction cytidine(1962) in 23S rRNA + S-adenosyl-L-methionine = 5-methylcytidine(1962) in 23S rRNA + S-adenosyl-L-homocysteine + H(+). In terms of biological role, specifically methylates the cytosine at position 1962 (m5C1962) of 23S rRNA. The polypeptide is Ribosomal RNA large subunit methyltransferase I (Alteromonas mediterranea (strain DSM 17117 / CIP 110805 / LMG 28347 / Deep ecotype)).